Here is a 276-residue protein sequence, read N- to C-terminus: Large ribosomal subunit protein uL2 (276 aa).

A disordered region spans residues 224 to 276 (VMNPVDHPHGGGEGKAPIGRKSPMTPWGKPTLGYKTRKKKNKSDKFIIRRRKK). Residues 258–276 (KTRKKKNKSDKFIIRRRKK) show a composition bias toward basic residues.

Belongs to the universal ribosomal protein uL2 family. In terms of assembly, part of the 50S ribosomal subunit. Forms a bridge to the 30S subunit in the 70S ribosome.

One of the primary rRNA binding proteins. Required for association of the 30S and 50S subunits to form the 70S ribosome, for tRNA binding and peptide bond formation. It has been suggested to have peptidyltransferase activity; this is somewhat controversial. Makes several contacts with the 16S rRNA in the 70S ribosome. This is Large ribosomal subunit protein uL2 from Geobacillus stearothermophilus (Bacillus stearothermophilus).